The primary structure comprises 221 residues: Cyclin-U3-1 (221 aa).

Belongs to the cyclin family. Cyclin U/P subfamily. In terms of assembly, interacts with CDKA-1 and CDKB1-1. Expressed in roots, stems and flowers. Expressed in the shoot apex, leaf primordia and young leaves.

The polypeptide is Cyclin-U3-1 (CYCU3-1) (Arabidopsis thaliana (Mouse-ear cress)).